The following is a 290-amino-acid chain: Pyridoxal kinase PdxY (290 aa).

Substrate-binding positions include Ser12 and 47-48 (TQ). ATP-binding positions include Asp114, Glu151, Lys184, and 211-214 (RPLL). Asp225 provides a ligand contact to substrate.

It belongs to the pyridoxine kinase family. PdxY subfamily. In terms of assembly, homodimer. Mg(2+) serves as cofactor.

The catalysed reaction is pyridoxal + ATP = pyridoxal 5'-phosphate + ADP + H(+). It participates in cofactor metabolism; pyridoxal 5'-phosphate salvage; pyridoxal 5'-phosphate from pyridoxal: step 1/1. Pyridoxal kinase involved in the salvage pathway of pyridoxal 5'-phosphate (PLP). Catalyzes the phosphorylation of pyridoxal to PLP. This is Pyridoxal kinase PdxY from Pseudomonas fluorescens (strain Pf0-1).